The following is a 145-amino-acid chain: Large ribosomal subunit protein uL13 (145 aa).

This sequence belongs to the universal ribosomal protein uL13 family. As to quaternary structure, part of the 50S ribosomal subunit.

This protein is one of the early assembly proteins of the 50S ribosomal subunit, although it is not seen to bind rRNA by itself. It is important during the early stages of 50S assembly. The polypeptide is Large ribosomal subunit protein uL13 (Bacillus cereus (strain G9842)).